The chain runs to 292 residues: GTP cyclohydrolase FolE2 (292 aa).

The protein belongs to the GTP cyclohydrolase IV family.

It carries out the reaction GTP + H2O = 7,8-dihydroneopterin 3'-triphosphate + formate + H(+). It participates in cofactor biosynthesis; 7,8-dihydroneopterin triphosphate biosynthesis; 7,8-dihydroneopterin triphosphate from GTP: step 1/1. Functionally, converts GTP to 7,8-dihydroneopterin triphosphate. The polypeptide is GTP cyclohydrolase FolE2 (Staphylococcus haemolyticus (strain JCSC1435)).